The primary structure comprises 522 residues: Berberine bridge enzyme-like Cyn d 4 (522 aa).

A signal peptide spans 1–25; it reads MARSRAFAFALLICAVAASCHVALS. A disulfide bridge connects residues Cys41 and Cys98. The FAD-binding PCMH-type domain maps to 76–252; sequence KTVKPLYIIT…ASWQVKLLPV (177 aa). An N-linked (GlcNAc...) asparagine glycan is attached at Asn88. Residues 108-114, Ser119, Ser152, 176-177, 181-185, Phe191, Glu237, and Val242 each bind FAD; these read VRSGGHD, VC, and GVGGH. The 6-(S-cysteinyl)-8alpha-(pros-histidyl)-FAD (His-Cys) cross-link spans 113-177; the sequence is HDYEGLSYRS…PKLGFPAGVC (65 aa). Residues Cys308 and Cys329 are joined by a disulfide bond. 2 N-linked (GlcNAc...) asparagine glycosylation sites follow: Asn325 and Asn354. Residue 461–465 participates in FAD binding; it reads YVNYR. A glycan (N-linked (GlcNAc...) asparagine) is linked at Asn477.

Belongs to the oxygen-dependent FAD-linked oxidoreductase family. Monomer. FAD is required as a cofactor. Post-translationally, the FAD cofactor is bound via a bicovalent 6-S-cysteinyl, 8alpha-N1-histidyl FAD linkage. In terms of processing, the N-terminus is blocked. Glycosylated. N-glycosylated. Contains fucose, N-acetylglucosamine, and mannose as main carbohydrates (in a ratio of approximately 3:2:1), and a minute amount of xylose. The two most abundant oligosaccharides are Fuc(1)GlcNAc(2)Man(3) and Fuc(1)GlcNAc(2)Man(2), together comprising about 80% of the total carbohydrate content. They are structurally unusual in having a L-Fuc alpha-(1,3)-linked to Asn-linked GlcNAc without a Xyl beta-(1,2)-linked to the branching Man. The other oligosaccharides make up only 9% of the total carbohydrate content and are characterized by the presence of Xyl beta-(1,2)-linked to the branching Man. Expressed in pollen (at protein level).

This is Berberine bridge enzyme-like Cyn d 4 from Cynodon dactylon (Bermuda grass).